A 361-amino-acid polypeptide reads, in one-letter code: MAGGRHRRVVGTLHLLLLVAALPWASRGVSPSASAWPEEKNYHQPAILNSSALRQIAEGTSISEMWQNDLQPLLIERYPGSPGSYAARQHIMQRIQRLQADWVLEIDTFLSQTPYGYRSFSNIISTLNPTAKRHLVLACHYDSKYFSHWNNRVFVGATDSAVPCAMMLELARALDKKLLSLKTVSDSKPDLSLQLIFFDGEEAFLHWSPQDSLYGSRHLAAKMASTPHPPGARGTSQLHGMDLLVLLDLIGAPNPTFPNFFPNSARWFERLQAIEHELHELGLLKDHSLEGRYFQNYSYGGVIQDDHIPFLRRGVPVLHLIPSPFPEVWHTMDDNEENLDESTIDNLNKILQVFVLEYLHL.

Residues 1–28 form the signal peptide; that stretch reads MAGGRHRRVVGTLHLLLLVAALPWASRG. The N-linked (GlcNAc...) asparagine glycan is linked to Asn49. A disulfide bridge links Cys139 with Cys164. Asp159 is a Zn(2+) binding site. The active-site Proton acceptor is the Glu201. Glu202 provides a ligand contact to Zn(2+). The Proton acceptor role is filled by Asp248. Asn296 carries N-linked (GlcNAc...) asparagine glycosylation. Position 330 (His330) interacts with Zn(2+).

It belongs to the glutaminyl-peptide cyclotransferase family.

It is found in the secreted. The catalysed reaction is N-terminal L-glutaminyl-[peptide] = N-terminal 5-oxo-L-prolyl-[peptide] + NH4(+). Functionally, responsible for the biosynthesis of pyroglutamyl peptides. Has a bias against acidic and tryptophan residues adjacent to the N-terminal glutaminyl residue and a lack of importance of chain length after the second residue. Also catalyzes N-terminal pyroglutamate formation. In vitro, catalyzes pyroglutamate formation of N-terminally truncated form of APP amyloid-beta peptides [Glu-3]-amyloid-beta. May be involved in the N-terminal pyroglutamate formation of several amyloid-related plaque-forming peptides. The polypeptide is Glutaminyl-peptide cyclotransferase (QPCT) (Homo sapiens (Human)).